Consider the following 218-residue polypeptide: Glutathione S-transferase (218 aa).

The GST N-terminal domain maps to 2–88; that stretch reads PVTLGYWDIR…YIARKHDLCG (87 aa). Glutathione-binding positions include 7 to 8, 46 to 50, 59 to 60, and 72 to 73; these read YW, WLNEK, NL, and QS. The GST C-terminal domain occupies 90-208; that stretch reads TEEERIQLDI…KSSRFSCKQI (119 aa). Residue Tyr116 participates in substrate binding.

The protein belongs to the GST superfamily. Mu family. Homodimer.

The protein resides in the cytoplasm. It carries out the reaction RX + glutathione = an S-substituted glutathione + a halide anion + H(+). Functionally, conjugation of reduced glutathione to a wide number of exogenous and endogenous hydrophobic electrophiles. This chain is Glutathione S-transferase, found in Mesocricetus auratus (Golden hamster).